The primary structure comprises 1281 residues: Protein ETHYLENE-INSENSITIVE 2 (1281 aa).

The Cytoplasmic segment spans residues 1–21; that stretch reads MDGQQLRSSESPASGGGGVTG. A helical transmembrane segment spans residues 22 to 42; it reads GGAPHLFHALGPALLISIGYI. The Extracellular portion of the chain corresponds to 43 to 61; it reads DLGKWVAAVEAGSRFGLDL. The helical transmembrane segment at 62 to 82 threads the bilayer; the sequence is VLLALLFNFMAILCQYLAACI. At 83 to 112 the chain is on the cytoplasmic side; that stretch reads GTVTGRSLAEICHQEYSRPTCIFLGVQAGL. A helical transmembrane segment spans residues 113-133; it reads SLLTSELTMIFGIALGFNLLF. Residues 134–137 lie on the Extracellular side of the membrane; sequence EYDD. The helical transmembrane segment at 138 to 158 threads the bilayer; the sequence is LITGICFATVVPNLLPYAISH. Over 159-163 the chain is Cytoplasmic; the sequence is LGKKM. Residues 164 to 184 traverse the membrane as a helical segment; it reads VGTLNACIAGFALLCYVLGLL. Over 185–208 the chain is Extracellular; that stretch reads VSQPQIPLTTNVIFPKLSGESAYS. The helical transmembrane segment at 209-229 threads the bilayer; that stretch reads LMALLGANVMAHNFYIHSSVV. The Cytoplasmic segment spans residues 230 to 238; it reads QGQKRSAFA. A helical transmembrane segment spans residues 239–259; it reads VGALFHDHLFSVLFIFTGIFL. The Extracellular segment spans residues 260-297; the sequence is VNHVLMNSAAADSTNTLLLTFQDVVELMNQIFVNPMAP. The chain crosses the membrane as a helical span at residues 298 to 318; the sequence is TIFLVVLLFSSHIISLTSAIG. Residues 319-325 are Cytoplasmic-facing; the sequence is SQVISQH. The chain crosses the membrane as a helical span at residues 326–346; the sequence is LFGINLPLSGHHLILKAFAIV. Residues 347–362 lie on the Extracellular side of the membrane; the sequence is PALYCAKVAGAEGIYQ. Residues 363 to 383 form a helical membrane-spanning segment; that stretch reads LLIICQIIQAMLLPSSVVPLF. Residues 384-400 are Cytoplasmic-facing; the sequence is RVASSRLIMGAHRVSLH. A helical membrane pass occupies residues 401–421; that stretch reads LEILTFLAFLLMLFSNIIFMA. Over 422–447 the chain is Extracellular; the sequence is EMLFGDSGWLNTLKGNTGSPVVFPST. The chain crosses the membrane as a helical span at residues 448–468; that stretch reads VLITVACVSVAFSLYMAVTPL. Over 469–1281 the chain is Cytoplasmic; sequence KSGSHEAELQ…KRRLSSKGQQ (813 aa). Disordered regions lie at residues 540-565 and 593-665; these read IESD…SPSF and ESTV…NGSG. Residues 548-557 show a composition bias toward polar residues; the sequence is HSTAHTSTAP. The span at 599–610 shows a compositional bias: basic and acidic residues; that stretch reads VDSKSTGERDIE.

It belongs to the NRAMP (TC 2.A.55) family. Expressed in roots, leaf sheaths, leaf blades, flowers, developing seeds, germinating seeds and young seedlings. Expressed in adventitious roots, vascular tissues of the seminal roots, lateral roots, the connecting region between vascular tissues and lateral roots, mature leaf, mature stem, tips of adventitious roots derived from the node, shoot apex, young panicle, anthers, pistil, stigma, ovary, seed coat and fruit coat pericarp.

Its subcellular location is the membrane. Its function is as follows. Central factor in ethylene signaling pathways that control development, senescence and grain size. Acts as a positive component of the ethylene-signaling pathway. The protein is Protein ETHYLENE-INSENSITIVE 2 of Oryza sativa subsp. japonica (Rice).